Reading from the N-terminus, the 228-residue chain is Interleukin-27 subunit beta (228 aa).

An N-terminal signal peptide occupies residues 1-18; that stretch reads MSKLLFLSLALWASRSPG. 2 consecutive Fibronectin type-III domains span residues 26–124 and 127–224; these read ALSQ…VAER and KPDP…VESA. Asn-54 and Asn-104 each carry an N-linked (GlcNAc...) asparagine glycan.

Belongs to the type I cytokine receptor family. Type 3 subfamily. As to quaternary structure, heterodimer with IL27/IL27A; not disulfide-linked. This heterodimer is known as interleukin IL-27. Heterodimer with IL12A; not disulfide-linked. This heterodimer is known as interleukin IL-35. Interacts with SQSTM1.

It is found in the secreted. Its function is as follows. Associates with IL27 to form the IL-27 interleukin, a heterodimeric cytokine which functions in innate immunity. IL-27 has pro- and anti-inflammatory properties, that can regulate T-helper cell development, suppress T-cell proliferation, stimulate cytotoxic T-cell activity, induce isotype switching in B-cells, and that has diverse effects on innate immune cells. Among its target cells are CD4 T-helper cells which can differentiate in type 1 effector cells (TH1), type 2 effector cells (TH2) and IL17 producing helper T-cells (TH17). It drives rapid clonal expansion of naive but not memory CD4 T-cells. It also strongly synergizes with IL-12 to trigger interferon-gamma/IFN-gamma production of naive CD4 T-cells, binds to the cytokine receptor WSX-1/TCCR. Another important role of IL-27 is its antitumor activity as well as its antiangiogenic activity with activation of production of antiangiogenic chemokines. The sequence is that of Interleukin-27 subunit beta (Ebi3) from Mus musculus (Mouse).